The chain runs to 250 residues: MLLIAGLGNPGPQYAHNRHNIGFMAADEIFRRHRFSNWQKKFQAEIADGVIDGEKVLLVKPQTFMNLSGQSIGEAMRFYKMTPADLVVIYDELDLVPGKLRIKTGGGSGGHNGIKSIDAHMQSFPGGQNYRRMRLGIGHPGAKELVHNYVLGDFAKADNEWLDTLMGAVADNVAMLARREDNSFMNRIALAMGDGNQRPGGVKTDPAQLEKAPPKAQSHIRQARQNQKKPNIPESGPMAEMLKKLLGKKD.

Tyr14 is a binding site for tRNA. His19 serves as the catalytic Proton acceptor. Residues Phe64, Asn66, and Asn112 each coordinate tRNA. Positions 192 to 250 (MGDGNQRPGGVKTDPAQLEKAPPKAQSHIRQARQNQKKPNIPESGPMAEMLKKLLGKKD) are disordered. Positions 219 to 229 (HIRQARQNQKK) are enriched in polar residues. The span at 241–250 (MLKKLLGKKD) shows a compositional bias: basic and acidic residues.

Belongs to the PTH family. Monomer.

The protein localises to the cytoplasm. The enzyme catalyses an N-acyl-L-alpha-aminoacyl-tRNA + H2O = an N-acyl-L-amino acid + a tRNA + H(+). Functionally, hydrolyzes ribosome-free peptidyl-tRNAs (with 1 or more amino acids incorporated), which drop off the ribosome during protein synthesis, or as a result of ribosome stalling. Catalyzes the release of premature peptidyl moieties from peptidyl-tRNA molecules trapped in stalled 50S ribosomal subunits, and thus maintains levels of free tRNAs and 50S ribosomes. In Brucella abortus (strain 2308), this protein is Peptidyl-tRNA hydrolase.